Consider the following 323-residue polypeptide: Phosphoribosylaminoimidazole-succinocarboxamide synthase (323 aa).

The protein belongs to the SAICAR synthetase family.

The enzyme catalyses 5-amino-1-(5-phospho-D-ribosyl)imidazole-4-carboxylate + L-aspartate + ATP = (2S)-2-[5-amino-1-(5-phospho-beta-D-ribosyl)imidazole-4-carboxamido]succinate + ADP + phosphate + 2 H(+). It participates in purine metabolism; IMP biosynthesis via de novo pathway; 5-amino-1-(5-phospho-D-ribosyl)imidazole-4-carboxamide from 5-amino-1-(5-phospho-D-ribosyl)imidazole-4-carboxylate: step 1/2. The sequence is that of Phosphoribosylaminoimidazole-succinocarboxamide synthase from Azobacteroides pseudotrichonymphae genomovar. CFP2.